Consider the following 609-residue polypeptide: Hemagglutinin/proteinase (609 aa).

The signal sequence occupies residues 1-24 (MKMIQRPLNWLVLAGAATGFPLYA). Positions 25 to 196 (AQMVTIDDAS…LDQWDGINHA (172 aa)) are excised as a propeptide. Histidine 343 contacts Zn(2+). Residue glutamate 344 is part of the active site. Histidine 347 and glutamate 367 together coordinate Zn(2+). Residue histidine 426 is the Proton donor of the active site.

This sequence belongs to the peptidase M4 family. It depends on Zn(2+) as a cofactor.

Its subcellular location is the secreted. Functionally, may play a role in the pathogenesis of cholera. Hap nicks and activates the A subunit of cholera enterotoxin and related enterotoxins. This Vibrio cholerae serotype O1 (strain ATCC 39315 / El Tor Inaba N16961) protein is Hemagglutinin/proteinase (hap).